The sequence spans 122 residues: Large ribosomal subunit protein uL14 (122 aa).

The protein belongs to the universal ribosomal protein uL14 family. Part of the 50S ribosomal subunit. Forms a cluster with proteins L3 and L19. In the 70S ribosome, L14 and L19 interact and together make contacts with the 16S rRNA in bridges B5 and B8.

In terms of biological role, binds to 23S rRNA. Forms part of two intersubunit bridges in the 70S ribosome. The chain is Large ribosomal subunit protein uL14 from Corynebacterium aurimucosum (strain ATCC 700975 / DSM 44827 / CIP 107346 / CN-1) (Corynebacterium nigricans).